We begin with the raw amino-acid sequence, 156 residues long: RNA polymerase sigma factor SigS (156 aa).

Positions 29 to 44 match the Polymerase core binding motif; it reads EYYQLLLIKMWQLSQI. Positions 126–145 form a DNA-binding region, H-T-H motif; the sequence is QFEIAEIMSLSLSTIKLIKM.

The protein belongs to the sigma-70 factor family.

In terms of biological role, sigma factors are initiation factors that promote the attachment of RNA polymerase to specific initiation sites and are then released. Sigma-S contributes to the protection against external stress, thus playing a role in cellular fitness and survival. The sequence is that of RNA polymerase sigma factor SigS (sigS) from Staphylococcus aureus (strain COL).